A 586-amino-acid polypeptide reads, in one-letter code: Aspartate--tRNA(Asp/Asn) ligase (586 aa).

Glu176 contributes to the L-aspartate binding site. An aspartate region spans residues 200–203 (QIFK). L-aspartate is bound at residue Arg222. ATP-binding positions include 222-224 (RDE) and Gln231. His449 contributes to the L-aspartate binding site. ATP is bound at residue Glu483. Arg490 provides a ligand contact to L-aspartate. Residue 535–538 (GIDR) participates in ATP binding.

It belongs to the class-II aminoacyl-tRNA synthetase family. Type 1 subfamily. Homodimer.

The protein resides in the cytoplasm. The catalysed reaction is tRNA(Asx) + L-aspartate + ATP = L-aspartyl-tRNA(Asx) + AMP + diphosphate. In terms of biological role, aspartyl-tRNA synthetase with relaxed tRNA specificity since it is able to aspartylate not only its cognate tRNA(Asp) but also tRNA(Asn). Reaction proceeds in two steps: L-aspartate is first activated by ATP to form Asp-AMP and then transferred to the acceptor end of tRNA(Asp/Asn). The protein is Aspartate--tRNA(Asp/Asn) ligase of Brachyspira hyodysenteriae (strain ATCC 49526 / WA1).